A 234-amino-acid chain; its full sequence is MATERYSFSLTTFSPSGKLVQLEYALAAVSGGAPSVGIIASNGVVIATENKHKSPLYEQHSVHRVEMIYNHIGMVYSGMGPDYRLLVKQARKIAQTYYLTYKEPIPVSQLVQRVATLMQEYTQSGGVRPFGVSLLICGWDNDRPYLYQSDPSGAYFAWKATAMGKNAVNGKTFLEKRYSEDLELDDAVHTAILTLKEGFEGKMTADNIEIGICDQNGFQRLDPASIKDYLASIP.

The protein belongs to the peptidase T1A family. In terms of assembly, the 26S proteasome consists of a 20S proteasome core and two 19S regulatory subunits. The 20S proteasome core is composed of 28 subunits that are arranged in four stacked rings, resulting in a barrel-shaped structure. The two end rings are each formed by seven alpha subunits, and the two central rings are each formed by seven beta subunits. The catalytic chamber with the active sites is on the inside of the barrel. Interacts with Rpn6.

The protein resides in the cytoplasm. It localises to the nucleus. Functionally, the proteasome is a multicatalytic proteinase complex which is characterized by its ability to cleave peptides with Arg, Phe, Tyr, Leu, and Glu adjacent to the leaving group at neutral or slightly basic pH. The proteasome has an ATP-dependent proteolytic activity. The chain is Proteasome subunit alpha type-2 (Prosalpha2) from Drosophila melanogaster (Fruit fly).